The sequence spans 270 residues: Homeobox protein pal-1 (270 aa).

Disordered stretches follow at residues 1–24 (MSVDVKSDFSENESSSTPSPTTVP), 96–130 (VKPPLSNGSSSSDSGMYPSPSDMMTPFPSTSSGAA), and 175–201 (LGNNHGKDRRSSSDGKTLPTGPGTNNV). Composition is skewed to low complexity over residues 14-24 (SSSTPSPTTVP) and 101-130 (SNGSSSSDSGMYPSPSDMMTPFPSTSSGAA). The homeobox DNA-binding region spans 206–265 (ADKYRMVYSDYQRLELEKEFHTSPFITSDRKSQLSTMLSLTERQIKIWFQNRRAKDRRDK).

It belongs to the Caudal homeobox family. As to quaternary structure, interacts with tir-1 and let-756. In terms of tissue distribution, blastomeres. Embryo. Oocytes.

The protein resides in the nucleus. Its subcellular location is the chromosome. It is found in the centromere. The protein localises to the kinetochore. Transcriptional activator. Interacts with promoter regions for tbx-8.9, tbx-9, elt-1, hnd-1, scrt-1, and vab-7 genes. Binds the sequence ATTTATGAC. Binds to the enhancer region of the hlh-1 gene promoter during embryonic body wall muscle development. Activates the gene for mab-5 in embryo development. Necessary for vab-7 expression in C blastomeres in the posterior of embryos. Required for posterior V6 neuroectoblast cell fate specification during postembryonic neurogenesis (patterning) which generates the characteristic ray lineage during male tail development. Binds to ced-3 promoter and activated expression which is crucial for tail-spike cell death. Has a role in E cell specification in endoderm development and body wall muscle development. The chain is Homeobox protein pal-1 (pal-1) from Caenorhabditis elegans.